Here is a 215-residue protein sequence, read N- to C-terminus: 2-dehydro-3-deoxy-phosphogluconate aldolase (215 aa).

Glutamate 46 acts as the Proton acceptor in catalysis. Residues arginine 50, threonine 74, and lysine 134 each coordinate pyruvate. The active-site Schiff-base intermediate with substrate is lysine 134.

It belongs to the KHG/KDPG aldolase family. Homotrimer.

It catalyses the reaction 2-dehydro-3-deoxy-6-phospho-D-gluconate = D-glyceraldehyde 3-phosphate + pyruvate. It participates in carbohydrate acid metabolism; 2-dehydro-3-deoxy-D-gluconate degradation; D-glyceraldehyde 3-phosphate and pyruvate from 2-dehydro-3-deoxy-D-gluconate: step 2/2. Functionally, involved in the degradation of glucose via the Entner-Doudoroff pathway. Catalyzes the reversible, stereospecific retro-aldol cleavage of 2-keto-3-deoxy-6-phosphogluconate (KDPG) to pyruvate and D-glyceraldehyde-3-phosphate. Involved in the degradation of 3,6-anhydro-L-galactose (L-AnG), which is the major monomeric sugar of red macroalgae. The cleavage of KDPG to glyceraldehyde 3-phosphate and pyruvate is the sixth step of this pathway. This chain is 2-dehydro-3-deoxy-phosphogluconate aldolase, found in Pseudoalteromonas atlantica (strain T6c / ATCC BAA-1087).